We begin with the raw amino-acid sequence, 158 residues long: Disease resistance response protein DRRG49-C (158 aa).

The protein belongs to the BetVI family.

This is Disease resistance response protein DRRG49-C from Pisum sativum (Garden pea).